The following is an 85-amino-acid chain: Large ribosomal subunit protein bL27 (85 aa).

Residues 1-23 form a disordered region; that stretch reads MAHKKAGGSSRNGRDSESKRLGV.

It belongs to the bacterial ribosomal protein bL27 family.

This chain is Large ribosomal subunit protein bL27, found in Nitrosococcus oceani (strain ATCC 19707 / BCRC 17464 / JCM 30415 / NCIMB 11848 / C-107).